The primary structure comprises 503 residues: MSTPEATAEAVSGHEPNRAVRARFCPSPTGTPHVGLVRTALYNWVFARHNQGKLVFRIEDTDASRDSEESYQALLDALRWLGLDWDEGPEVGGEYGPYRQSERRDIYADIARRLLEAGELYESFSTPEEVEARHRAAGRDPKLGYDNADRDLTDEQKAAFRAEGRNAVLRLRMPEHDITFADLVRGEITFPAGSVPDPVLVRGNGDALYTLTNPVDDALMRITHVLRGEDLLSSTPRQIALYDALRRIGVTDFTPEFGHLPFVMGEGNKKLSKRDPQSNLFHHRDRGFLPEGLLNYLALLGWSISEDRDVFTLDEMVEAFEIGRVSSNPARFDQKKADAINSAHLRALAPDDFLERVVPYLVSGGVLPAEPTEEQLATVRAAAPLVQERLIVLSDAVGMMRFLFDGDDFAPDPASAEKALGEDARPVLEAAVSALEALPEWTTEAIEAALKESVVDGLGIKPRKAFAPVRVAVTGRTVSPPLYESMELLGREVSLRRLRAPLG.

Positions Pro-26–Leu-36 match the 'HIGH' region motif. The segment at Thr-126 to Ala-148 is disordered. The segment covering Val-130 to Ala-148 has biased composition (basic and acidic residues). The short motif at Lys-270 to Arg-274 is the 'KMSKS' region element. Position 273 (Lys-273) interacts with ATP.

This sequence belongs to the class-I aminoacyl-tRNA synthetase family. Glutamate--tRNA ligase type 1 subfamily. In terms of assembly, monomer.

Its subcellular location is the cytoplasm. It carries out the reaction tRNA(Glu) + L-glutamate + ATP = L-glutamyl-tRNA(Glu) + AMP + diphosphate. In terms of biological role, catalyzes the attachment of glutamate to tRNA(Glu) in a two-step reaction: glutamate is first activated by ATP to form Glu-AMP and then transferred to the acceptor end of tRNA(Glu). This is Glutamate--tRNA ligase from Saccharopolyspora erythraea (strain ATCC 11635 / DSM 40517 / JCM 4748 / NBRC 13426 / NCIMB 8594 / NRRL 2338).